The sequence spans 59 residues: Embryonic testis differentiation protein (59 aa).

Residues 1-28 (MDEKNPEAVPRPPEQNTELVPPKKSKSK) are disordered.

As to expression, specifically expressed in testis.

This chain is Embryonic testis differentiation protein, found in Mus musculus (Mouse).